Here is a 428-residue protein sequence, read N- to C-terminus: 3-deoxy-D-manno-octulosonic acid transferase (428 aa).

Residue glutamate 64 is the Proton acceptor of the active site. Residues 274–275 (PR), 316–318 (LGE), and 342–345 (NLIE) each bind CMP.

It belongs to the glycosyltransferase group 1 family. Glycosyltransferase 30 subfamily.

The protein localises to the cell inner membrane. The enzyme catalyses lipid IVA (E. coli) + CMP-3-deoxy-beta-D-manno-octulosonate = alpha-Kdo-(2-&gt;6)-lipid IVA (E. coli) + CMP + H(+). It functions in the pathway bacterial outer membrane biogenesis; LPS core biosynthesis. Functionally, involved in lipopolysaccharide (LPS) biosynthesis. Catalyzes the transfer of a single 3-deoxy-D-manno-octulosonate (Kdo) residue from CMP-Kdo to lipid IV(A), the tetraacyldisaccharide-1,4'-bisphosphate precursor of lipid A. The protein is 3-deoxy-D-manno-octulosonic acid transferase (waaA) of Bordetella pertussis.